Reading from the N-terminus, the 170-residue chain is Acireductone dioxygenase (170 aa).

H99, H101, E105, and H144 together coordinate Fe(2+). Ni(2+)-binding residues include H99, H101, E105, and H144.

This sequence belongs to the acireductone dioxygenase (ARD) family. Monomer. Fe(2+) serves as cofactor. Requires Ni(2+) as cofactor.

The catalysed reaction is 1,2-dihydroxy-5-(methylsulfanyl)pent-1-en-3-one + O2 = 3-(methylsulfanyl)propanoate + CO + formate + 2 H(+). It carries out the reaction 1,2-dihydroxy-5-(methylsulfanyl)pent-1-en-3-one + O2 = 4-methylsulfanyl-2-oxobutanoate + formate + 2 H(+). Its pathway is amino-acid biosynthesis; L-methionine biosynthesis via salvage pathway; L-methionine from S-methyl-5-thio-alpha-D-ribose 1-phosphate: step 5/6. Catalyzes 2 different reactions between oxygen and the acireductone 1,2-dihydroxy-3-keto-5-methylthiopentene (DHK-MTPene) depending upon the metal bound in the active site. Fe-containing acireductone dioxygenase (Fe-ARD) produces formate and 2-keto-4-methylthiobutyrate (KMTB), the alpha-ketoacid precursor of methionine in the methionine recycle pathway. Ni-containing acireductone dioxygenase (Ni-ARD) produces methylthiopropionate, carbon monoxide and formate, and does not lie on the methionine recycle pathway. The protein is Acireductone dioxygenase of Bacillus thuringiensis (strain Al Hakam).